Reading from the N-terminus, the 366-residue chain is Fructose-bisphosphate aldolase 1 (366 aa).

2 residues coordinate substrate: arginine 56 and lysine 147. Catalysis depends on glutamate 189, which acts as the Proton acceptor. Residue lysine 231 is the Schiff-base intermediate with dihydroxyacetone-P of the active site.

The protein belongs to the class I fructose-bisphosphate aldolase family. Ubiquitous.

It carries out the reaction beta-D-fructose 1,6-bisphosphate = D-glyceraldehyde 3-phosphate + dihydroxyacetone phosphate. Its pathway is carbohydrate degradation; glycolysis; D-glyceraldehyde 3-phosphate and glycerone phosphate from D-glucose: step 4/4. In terms of biological role, may be involved in the metabolism of fructose-bisphosphate (beta-D-fructose 1,6-bisphosphate) and of fructose 1-phosphate. The protein is Fructose-bisphosphate aldolase 1 (aldo-1) of Caenorhabditis elegans.